The primary structure comprises 294 residues: Ribosomal protein L11 methyltransferase (294 aa).

Residues threonine 146, glycine 167, aspartate 189, and asparagine 231 each contribute to the S-adenosyl-L-methionine site.

Belongs to the methyltransferase superfamily. PrmA family.

The protein localises to the cytoplasm. It carries out the reaction L-lysyl-[protein] + 3 S-adenosyl-L-methionine = N(6),N(6),N(6)-trimethyl-L-lysyl-[protein] + 3 S-adenosyl-L-homocysteine + 3 H(+). Methylates ribosomal protein L11. In Aliivibrio fischeri (strain ATCC 700601 / ES114) (Vibrio fischeri), this protein is Ribosomal protein L11 methyltransferase.